A 40-amino-acid chain; its full sequence is Photosystem II reaction center protein J (40 aa).

The chain crosses the membrane as a helical span at residues I8 to F28.

It belongs to the PsbJ family. PSII is composed of 1 copy each of membrane proteins PsbA, PsbB, PsbC, PsbD, PsbE, PsbF, PsbH, PsbI, PsbJ, PsbK, PsbL, PsbM, PsbT, PsbX, PsbY, PsbZ, Psb30/Ycf12, at least 3 peripheral proteins of the oxygen-evolving complex and a large number of cofactors. It forms dimeric complexes.

The protein localises to the plastid. It is found in the chloroplast thylakoid membrane. One of the components of the core complex of photosystem II (PSII). PSII is a light-driven water:plastoquinone oxidoreductase that uses light energy to abstract electrons from H(2)O, generating O(2) and a proton gradient subsequently used for ATP formation. It consists of a core antenna complex that captures photons, and an electron transfer chain that converts photonic excitation into a charge separation. This is Photosystem II reaction center protein J from Pinus thunbergii (Japanese black pine).